The primary structure comprises 145 residues: Large ribosomal subunit protein bL17 (145 aa).

The segment at 123–145 is disordered; sequence KRVDRKKKDPAKDKTEEKKLATA.

This sequence belongs to the bacterial ribosomal protein bL17 family. As to quaternary structure, part of the 50S ribosomal subunit. Contacts protein L32.

The polypeptide is Large ribosomal subunit protein bL17 (Pelagibacter ubique (strain HTCC1062)).